A 296-amino-acid polypeptide reads, in one-letter code: Methylsterol monooxygenase erg25B (296 aa).

The next 3 helical transmembrane spans lie at 50 to 70, 98 to 118, and 125 to 145; these read IMSF…WILI, FVLL…HPMA, and TSVP…FFVL. Residues 140–276 form the Fatty acid hydroxylase domain; the sequence is AIFFVLEDTW…FRWWDYLLDT (137 aa). A Histidine box-1 motif is present at residues 154-158; the sequence is HRALH. A Histidine box-2 motif is present at residues 167 to 171; it reads HKIHH. A helical transmembrane segment spans residues 201-221; the sequence is ILWCALTGDLHIFTMYVWIVL. The Histidine box-3 motif lies at 251-257; it reads HHDLHHE.

Belongs to the sterol desaturase family. It depends on Fe cation as a cofactor.

It is found in the endoplasmic reticulum membrane. Its pathway is steroid metabolism; ergosterol biosynthesis. In terms of biological role, sterol-C4-methyl oxidase; part of the third module of ergosterol biosynthesis pathway that includes the late steps of the pathway. Erg25B is a catalytic component of the C-4 demethylation complex that catalyzes the conversion of 4,4-dimethylfecosterol into fecosterol via 4-methylfecosterol. The third module or late pathway involves the ergosterol synthesis itself through consecutive reactions that mainly occur in the endoplasmic reticulum (ER) membrane. Firstly, the squalene synthase erg9 catalyzes the condensation of 2 farnesyl pyrophosphate moieties to form squalene, which is the precursor of all steroids. Squalene synthase is crucial for balancing the incorporation of farnesyl diphosphate (FPP) into sterol and nonsterol isoprene synthesis. Secondly, squalene is converted into lanosterol by the consecutive action of the squalene epoxidase erg1 and the lanosterol synthase erg7. Then, the delta(24)-sterol C-methyltransferase erg6 methylates lanosterol at C-24 to produce eburicol. Eburicol is the substrate of the sterol 14-alpha demethylase encoded by cyp51A and cyp51B, to yield 4,4,24-trimethyl ergosta-8,14,24(28)-trienol. The C-14 reductase erg24 then reduces the C14=C15 double bond which leads to 4,4-dimethylfecosterol. A sequence of further demethylations at C-4, involving the C-4 demethylation complex containing the C-4 methylsterol oxidases erg25A or erg25B, the sterol-4-alpha-carboxylate 3-dehydrogenase erg26 and the 3-keto-steroid reductase erg27, leads to the production of fecosterol via 4-methylfecosterol. The C-8 sterol isomerase erg2 then catalyzes the reaction which results in unsaturation at C-7 in the B ring of sterols and thus converts fecosterol to episterol. The sterol-C5-desaturase erg3B then catalyzes the introduction of a C-5 double bond in the B ring to produce 5-dehydroepisterol. The 2 other sterol-C5-desaturases, erg3A and erg3C, seem to be less important in ergosterol biosynthesis. The C-22 sterol desaturase erg5 further converts 5-dehydroepisterol into ergosta-5,7,22,24(28)-tetraen-3beta-ol by forming the C-22(23) double bond in the sterol side chain. Finally, ergosta-5,7,22,24(28)-tetraen-3beta-ol is substrate of the C-24(28) sterol reductases erg4A and erg4B to produce ergosterol. Possible alternative sterol biosynthetic pathways might exist from fecosterol to ergosterol, depending on the activities of the erg3 isoforms. The polypeptide is Methylsterol monooxygenase erg25B (Aspergillus fumigatus (strain ATCC MYA-4609 / CBS 101355 / FGSC A1100 / Af293) (Neosartorya fumigata)).